Consider the following 83-residue polypeptide: Cytochrome c5 (83 aa).

4 residues coordinate heme c: C15, C18, H19, and M59. C65 and C68 form a disulfide bridge.

Belongs to the cytochrome c family. In terms of assembly, homodimer. Binds 1 heme c group covalently per subunit.

In terms of biological role, it is unreactive with cytochrome c reductase or oxidase. This Azotobacter vinelandii protein is Cytochrome c5.